The sequence spans 239 residues: SGAVHFSFTKFSTSSSDLTLQGSALVSSKGSLKKNPSKKGKPVDHSVGRALYRSPIHIWDETTGKVASFDATFSFVSEAPAIPMLFPSSKGELNDEDDTRIGGQLGVVNDSYNVIRVTVAVENDGYRNRVDPSARPHISLPIKSVRSKKTAKWNMQTGKVGTAHISYNSVAKRLSAVVSYTGNSSSTTVSYDVLLNLAVLPSKVLVGKTATGLYKDHVETNTILSWSFTSKLKTNSIAD.

The Mn(2+) site is built by Glu-122 and Asp-124. Positions 124, 126, 128, and 131 each coordinate Ca(2+). 2 residues coordinate Mn(2+): Asp-131 and His-137.

This sequence belongs to the leguminous lectin family. Homotetramer. In terms of tissue distribution, seed.

Its subcellular location is the vacuole. It localises to the aleurone grain. In terms of biological role, lactose-binding lectin. Also binds derivatives of galactose, glucose, lactose, and mannose. Binds O-glycoproteins such as mucins more strongly than N-glycoproteins. Shows agglutinating activity towards rabbit erythrocytes. This Cymbosema roseum (Dioclea purpurea) protein is Lactose-binding lectin-2.